Here is a 527-residue protein sequence, read N- to C-terminus: Bifunctional methyltransferase (527 aa).

The tract at residues 1–309 (MQYSIKQVLS…GHSRVILFSP (309 aa)) is hemK. The segment at 1–311 (MQYSIKQVLS…SRVILFSPIN (311 aa)) is RF MTase. Residues 149 to 153 (GTGSG), Asp-172, Trp-201, Asn-216, Glu-356, Glu-381, Asn-408, and Asp-430 each bind S-adenosyl-L-methionine. Residue 216–219 (NPPY) coordinates substrate. Positions 310-527 (INLNRSYARR…IILQHVSGDH (218 aa)) are tRNA (guanine-N(7)-)-methyltransferase. A tRNA MTase region spans residues 314 to 527 (RSYARRIGKS…IILQHVSGDH (214 aa)). Asp-430 is an active-site residue. Lys-434 and Asp-466 together coordinate substrate.

In the C-terminal section; belongs to the class I-like SAM-binding methyltransferase superfamily. TrmB family. The protein in the N-terminal section; belongs to the protein N5-glutamine methyltransferase family. PrmC subfamily.

The enzyme catalyses L-glutaminyl-[peptide chain release factor] + S-adenosyl-L-methionine = N(5)-methyl-L-glutaminyl-[peptide chain release factor] + S-adenosyl-L-homocysteine + H(+). It catalyses the reaction guanosine(46) in tRNA + S-adenosyl-L-methionine = N(7)-methylguanosine(46) in tRNA + S-adenosyl-L-homocysteine. In terms of biological role, methylates the class 1 translation termination release factors RF1/PrfA and RF2/PrfB on the glutamine residue of the universally conserved GGQ motif. Its function is as follows. Catalyzes the formation of N(7)-methylguanine at position 46 (m7G46) in tRNA. The protein is Bifunctional methyltransferase (prmC/trmB) of Rickettsia felis (strain ATCC VR-1525 / URRWXCal2) (Rickettsia azadi).